The primary structure comprises 118 residues: Thioredoxin H3 (118 aa).

Position 2 is an N-acetylalanine (alanine 2). In terms of domain architecture, Thioredoxin spans 2–113 (AAEGEVIACH…IIANLEKHKT (112 aa)). Catalysis depends on nucleophile residues cysteine 39 and cysteine 42. The cysteines at positions 39 and 42 are disulfide-linked.

The protein belongs to the thioredoxin family. Plant H-type subfamily. Interacts with FBA5 and FBA8. Interacts with FBA6. Interacts with MDH1.

It localises to the cytoplasm. Its function is as follows. Thiol-disulfide oxidoreductase that possesses disulfide reductase and insulin disulfide bonds reducing activities. Heat shock causes oligomerization and formation of high molecular weight (HMW) complexes with concomitant functional switching from a disulfide reductase to chaperone. The sequence is that of Thioredoxin H3 (TRX3) from Arabidopsis thaliana (Mouse-ear cress).